Reading from the N-terminus, the 580-residue chain is Methyl-CpG-binding domain protein 4 (580 aa).

The segment at 1 to 36 is disordered; sequence MGTTGLESLSLGDRGAAPTVTSSERLVPDPPNDLRK. The region spanning 76–148 is the MBD domain; it reads ATAGTECRKS…EDFDFTVLSK (73 aa). 2 positions are modified to phosphoserine: S318 and S428. D560 is an active-site residue.

As to quaternary structure, interacts with MLH1.

The protein resides in the nucleus. Mismatch-specific DNA N-glycosylase involved in DNA repair. Has thymine glycosylase activity and is specific for G:T mismatches within methylated and unmethylated CpG sites. Can also remove uracil or 5-fluorouracil in G:U mismatches. Has no lyase activity. Was first identified as methyl-CpG-binding protein. The protein is Methyl-CpG-binding domain protein 4 of Homo sapiens (Human).